A 323-amino-acid chain; its full sequence is ATP synthase gamma chain (323 aa).

It belongs to the ATPase gamma chain family. F-type ATPases have 2 components, CF(1) - the catalytic core - and CF(0) - the membrane proton channel. CF(1) has five subunits: alpha(3), beta(3), gamma(1), delta(1), epsilon(1). CF(0) has three main subunits: a, b and c.

It is found in the cell membrane. Produces ATP from ADP in the presence of a proton gradient across the membrane. The gamma chain is believed to be important in regulating ATPase activity and the flow of protons through the CF(0) complex. The polypeptide is ATP synthase gamma chain (Nocardia farcinica (strain IFM 10152)).